The sequence spans 273 residues: Ribosomal RNA small subunit methyltransferase A (273 aa).

Residues asparagine 18, leucine 20, glycine 45, glutamate 66, aspartate 91, and asparagine 113 each coordinate S-adenosyl-L-methionine.

Belongs to the class I-like SAM-binding methyltransferase superfamily. rRNA adenine N(6)-methyltransferase family. RsmA subfamily.

The protein resides in the cytoplasm. It carries out the reaction adenosine(1518)/adenosine(1519) in 16S rRNA + 4 S-adenosyl-L-methionine = N(6)-dimethyladenosine(1518)/N(6)-dimethyladenosine(1519) in 16S rRNA + 4 S-adenosyl-L-homocysteine + 4 H(+). Specifically dimethylates two adjacent adenosines (A1518 and A1519) in the loop of a conserved hairpin near the 3'-end of 16S rRNA in the 30S particle. May play a critical role in biogenesis of 30S subunits. The sequence is that of Ribosomal RNA small subunit methyltransferase A from Escherichia coli (strain 55989 / EAEC).